The primary structure comprises 1235 residues: Receptor-type adenylate cyclase ESAG 4 (1235 aa).

The interval 1-20 is disordered; it reads MNMLHLSDRNASLAPSGGEH. Topologically, residues 1 to 32 are cytoplasmic; it reads MNMLHLSDRNASLAPSGGEHSLPTGGAVCRDA. The helical transmembrane segment at 33–53 threads the bilayer; the sequence is MDILPVILRAPVALLLLLVVL. At 54–858 the chain is on the extracellular side; the sequence is PQLSVGAEAN…SNAGRISGAS (805 aa). 8 N-linked (GlcNAc...) asparagine glycosylation sites follow: Asn63, Asn90, Asn97, Asn362, Asn531, Asn566, Asn705, and Asn830. The chain crosses the membrane as a helical span at residues 859-879; sequence LVGIIIGGALALFLVVALGVV. Topologically, residues 880–1235 are cytoplasmic; the sequence is PYFFLRNTVI…VSSQVEERLL (356 aa). Residues 900–1054 form the Guanylate cyclase domain; the sequence is TLIFTDIESS…RTSNMAARTE (155 aa). Positions 905 and 948 each coordinate Mg(2+).

The protein belongs to the adenylyl cyclase class-3 family. Mg(2+) serves as cofactor.

It localises to the membrane. The catalysed reaction is ATP = 3',5'-cyclic AMP + diphosphate. Could act as a receptor for an unknown ligand. In Trypanosoma brucei brucei, this protein is Receptor-type adenylate cyclase ESAG 4 (ESAG4).